We begin with the raw amino-acid sequence, 89 residues long: Small ribosomal subunit protein uS15 (89 aa).

It belongs to the universal ribosomal protein uS15 family. Part of the 30S ribosomal subunit. Forms a bridge to the 50S subunit in the 70S ribosome, contacting the 23S rRNA.

One of the primary rRNA binding proteins, it binds directly to 16S rRNA where it helps nucleate assembly of the platform of the 30S subunit by binding and bridging several RNA helices of the 16S rRNA. Its function is as follows. Forms an intersubunit bridge (bridge B4) with the 23S rRNA of the 50S subunit in the ribosome. The polypeptide is Small ribosomal subunit protein uS15 (Carboxydothermus hydrogenoformans (strain ATCC BAA-161 / DSM 6008 / Z-2901)).